The sequence spans 497 residues: Acetyl-coenzyme A carboxylase carboxyl transferase subunit beta (497 aa).

The CoA carboxyltransferase N-terminal domain maps to 217–489 (LWLQCDNCYG…NQNSNQYSQY (273 aa)). Zn(2+)-binding residues include C221, C224, C240, and C243. A C4-type zinc finger spans residues 221-243 (CDNCYGLNYKKVLKSKMTICEQC).

This sequence belongs to the AccD/PCCB family. In terms of assembly, acetyl-CoA carboxylase is a heterohexamer composed of biotin carboxyl carrier protein, biotin carboxylase and 2 subunits each of ACCase subunit alpha and ACCase plastid-coded subunit beta (accD). The cofactor is Zn(2+).

The protein resides in the plastid. It carries out the reaction N(6)-carboxybiotinyl-L-lysyl-[protein] + acetyl-CoA = N(6)-biotinyl-L-lysyl-[protein] + malonyl-CoA. It functions in the pathway lipid metabolism; malonyl-CoA biosynthesis; malonyl-CoA from acetyl-CoA: step 1/1. Functionally, component of the acetyl coenzyme A carboxylase (ACC) complex. Biotin carboxylase (BC) catalyzes the carboxylation of biotin on its carrier protein (BCCP) and then the CO(2) group is transferred by the transcarboxylase to acetyl-CoA to form malonyl-CoA. The polypeptide is Acetyl-coenzyme A carboxylase carboxyl transferase subunit beta (Cuscuta reflexa (Southern Asian dodder)).